The primary structure comprises 551 residues: Crossover junction endonuclease EME1B (551 aa).

Disordered regions lie at residues 1 to 55 and 187 to 239; these read MNDH…PIFV and TTLP…RLEK. The span at 37 to 51 shows a compositional bias: polar residues; that stretch reads SDPTPQKQPPESSFT. Residues 202-239 are compositionally biased toward basic and acidic residues; sequence SKEDKTSAMEEKKLRKEQERLEKAASKAEEAERKRLEK. A coiled-coil region spans residues 203–253; that stretch reads KEDKTSAMEEKKLRKEQERLEKAASKAEEAERKRLEKEKKKWEKGKLALKS. The region spanning 287–484 is the ERCC4 domain; sequence NPIERSIVWT…PSMKSLLKVY (198 aa).

This sequence belongs to the EME1/MMS4 family. In terms of assembly, forms a heterodimer with MUS81. It depends on Mg(2+) as a cofactor. Ca(2+) is required as a cofactor.

Its subcellular location is the nucleus. Its function is as follows. Interacts with MUS81 to form a DNA structure-specific endonuclease with substrate preference for branched DNA structures with a 5'-end at the branch nick. Typical substrates include 3'-flap structures, D-loops, replication forks, nicked Holliday junctions and also intact Holliday junctions with a reduced efficiency. May be required in mitosis for the processing of stalled or collapsed replication fork intermediates. Plays a role in DNA repair and in genotoxic stress-induced homologous recombination (HR) in somatic cells. Mediates a subset of meiotic recombination events that are insensitive to crossover interference. The polypeptide is Crossover junction endonuclease EME1B (EME1B) (Arabidopsis thaliana (Mouse-ear cress)).